A 676-amino-acid polypeptide reads, in one-letter code: DNA ligase (676 aa).

NAD(+) contacts are provided by residues 34-38, 83-84, and Glu-117; these read DQEFD and SL. Lys-119 functions as the N6-AMP-lysine intermediate in the catalytic mechanism. Residues Arg-140, Glu-177, Lys-285, and Lys-309 each coordinate NAD(+). Zn(2+) contacts are provided by Cys-403, Cys-406, Cys-427, and Cys-434. A BRCT domain is found at 595-676; sequence NNNGLLKNKT…EWLKMLNKSG (82 aa).

Belongs to the NAD-dependent DNA ligase family. LigA subfamily. The cofactor is Mg(2+). Requires Mn(2+) as cofactor.

It catalyses the reaction NAD(+) + (deoxyribonucleotide)n-3'-hydroxyl + 5'-phospho-(deoxyribonucleotide)m = (deoxyribonucleotide)n+m + AMP + beta-nicotinamide D-nucleotide.. Functionally, DNA ligase that catalyzes the formation of phosphodiester linkages between 5'-phosphoryl and 3'-hydroxyl groups in double-stranded DNA using NAD as a coenzyme and as the energy source for the reaction. It is essential for DNA replication and repair of damaged DNA. The chain is DNA ligase from Pelagibacter ubique (strain HTCC1062).